Here is a 517-residue protein sequence, read N- to C-terminus: UDP-N-acetylmuramoyl-tripeptide--D-alanyl-D-alanine ligase (517 aa).

An ATP-binding site is contributed by 138-144 (GSSGKTS).

This sequence belongs to the MurCDEF family. MurF subfamily.

The protein localises to the cytoplasm. It carries out the reaction D-alanyl-D-alanine + UDP-N-acetyl-alpha-D-muramoyl-L-alanyl-gamma-D-glutamyl-meso-2,6-diaminopimelate + ATP = UDP-N-acetyl-alpha-D-muramoyl-L-alanyl-gamma-D-glutamyl-meso-2,6-diaminopimeloyl-D-alanyl-D-alanine + ADP + phosphate + H(+). The protein operates within cell wall biogenesis; peptidoglycan biosynthesis. Involved in cell wall formation. Catalyzes the final step in the synthesis of UDP-N-acetylmuramoyl-pentapeptide, the precursor of murein. This chain is UDP-N-acetylmuramoyl-tripeptide--D-alanyl-D-alanine ligase, found in Mycobacterium leprae (strain TN).